We begin with the raw amino-acid sequence, 282 residues long: Pyridoxal 5'-phosphate synthase subunit PdxS (282 aa).

Asp14 contributes to the D-ribose 5-phosphate binding site. The active-site Schiff-base intermediate with D-ribose 5-phosphate is the Lys71. Gly143 is a binding site for D-ribose 5-phosphate. Arg155 is a D-glyceraldehyde 3-phosphate binding site. Residues Gly204 and 225-226 (GS) contribute to the D-ribose 5-phosphate site.

Belongs to the PdxS/SNZ family. As to quaternary structure, in the presence of PdxT, forms a dodecamer of heterodimers.

The catalysed reaction is aldehydo-D-ribose 5-phosphate + D-glyceraldehyde 3-phosphate + L-glutamine = pyridoxal 5'-phosphate + L-glutamate + phosphate + 3 H2O + H(+). It participates in cofactor biosynthesis; pyridoxal 5'-phosphate biosynthesis. In terms of biological role, catalyzes the formation of pyridoxal 5'-phosphate from ribose 5-phosphate (RBP), glyceraldehyde 3-phosphate (G3P) and ammonia. The ammonia is provided by the PdxT subunit. Can also use ribulose 5-phosphate and dihydroxyacetone phosphate as substrates, resulting from enzyme-catalyzed isomerization of RBP and G3P, respectively. This is Pyridoxal 5'-phosphate synthase subunit PdxS from Treponema denticola (strain ATCC 35405 / DSM 14222 / CIP 103919 / JCM 8153 / KCTC 15104).